The chain runs to 383 residues: Ceramide synthase 3 (383 aa).

Residues 32-52 (VFVKPSHLYVTIPYAFLLLII) form a helical membrane-spanning segment. Residues 66 to 127 (KSFGIKETVR…RSRRNQERPS (62 aa)) are homeobox-like. Positions 130–331 (KKFQEACWRF…ILKMLNRCIF (202 aa)) constitute a TLC domain. 5 helical membrane passes run 139 to 159 (FAFYLMITVAGIAFLYDKPWL), 174 to 194 (LLPSQYWYYILEMSFYWSLLF), 205 to 225 (FLAHIIHHLAAISLMSFSWCA), 264 to 284 (FFIFSTIFFISRLIVFPFWIL), and 298 to 318 (FFSYIFLNLQLMILQVLHLYW). Residues 319 to 383 (GYYILKMLNR…HLIPNGQHGH (65 aa)) are Cytoplasmic-facing. Ser-340 bears the Phosphoserine mark. A compositionally biased stretch (acidic residues) spans 342-355 (DEDYEEEEEEEEEE). The interval 342–363 (DEDYEEEEEEEEEEATKGKEMD) is disordered.

In terms of tissue distribution, expressed in the epidermis, where it localizes at the interface between the stratum granulosum and the stratum corneum (at protein level).

It is found in the endoplasmic reticulum membrane. It carries out the reaction a very long-chain fatty acyl-CoA + a sphingoid base = an N-(very-long-chain fatty acyl)-sphingoid base + CoA + H(+). The enzyme catalyses docosanoyl-CoA + sphinganine = N-docosanoylsphinganine + CoA + H(+). It catalyses the reaction tetracosanoyl-CoA + sphinganine = N-tetracosanoylsphinganine + CoA + H(+). The catalysed reaction is hexacosanoyl-CoA + sphinganine = N-hexacosanoylsphinganine + CoA + H(+). It carries out the reaction 2-hydroxydocosanoyl-CoA + sphinganine = N-(2-hydroxydocosanoyl)-sphinganine + CoA + H(+). The enzyme catalyses 2-hydroxytetracosanoyl-CoA + sphinganine = N-(2-hydroxytetracosanoyl)-sphinganine + CoA + H(+). It catalyses the reaction an ultra-long-chain fatty acyl-CoA + a sphingoid base = an N-(ultra-long-chain-acyl)-sphingoid base + CoA + H(+). The catalysed reaction is octacosanoyl-CoA + sphinganine = N-(octacosanoyl)-sphinganine + CoA + H(+). It carries out the reaction a fatty acyl-CoA + sphing-4-enine = an N-acylsphing-4-enine + CoA + H(+). The enzyme catalyses sphinganine + octadecanoyl-CoA = N-(octadecanoyl)-sphinganine + CoA + H(+). It catalyses the reaction 2-hydroxyoctadecanoyl-CoA + sphinganine = N-(2-hydroxyoctadecanoyl)-sphinganine + CoA + H(+). The protein operates within lipid metabolism; sphingolipid metabolism. In terms of biological role, ceramide synthase that catalyzes the transfer of the acyl chain from acyl-CoA to a sphingoid base, with high selectivity toward very- and ultra-long-chain fatty acyl-CoA (chain length greater than C22). N-acylates sphinganine and sphingosine bases to form dihydroceramides and ceramides in de novo synthesis and salvage pathways, respectively. It is crucial for the synthesis of ultra-long-chain ceramides in the epidermis, to maintain epidermal lipid homeostasis and terminal differentiation. This Homo sapiens (Human) protein is Ceramide synthase 3.